The following is a 754-amino-acid chain: DNA repair protein RAD4 (754 aa).

The segment at 23–51 (EKAPLSRRRRVRRKNQPLPDAKKKFKTGL) is disordered. Over residues 27-37 (LSRRRRVRRKN) the composition is skewed to basic residues. Residues 250–269 (DFLRAVSKGHGDPDISVQGF) mediate DNA binding. The disordered stretch occupies residues 701–754 (IANHEARPYSEPSEPEDSLDYVSVDKAEESATDDDVGEDYSDFMKELEMSEESD). Residues 730 to 741 (SATDDDVGEDYS) show a composition bias toward acidic residues.

Belongs to the XPC family.

The protein resides in the cytoplasm. The protein localises to the nucleus. Its function is as follows. Involved in nucleotide excision repair of DNA damaged with UV light, bulky adducts, or cross-linking agents. The sequence is that of DNA repair protein RAD4 (RAD4) from Saccharomyces cerevisiae (strain ATCC 204508 / S288c) (Baker's yeast).